The chain runs to 117 residues: Large ribosomal subunit protein uL24 (117 aa).

Basic residues predominate over residues 1 to 10 (MSKQPRKQRK). The interval 1-28 (MSKQPRKQRKALYNAPAHARGKHMSATL) is disordered.

It belongs to the universal ribosomal protein uL24 family. In terms of assembly, part of the 50S ribosomal subunit.

One of two assembly initiator proteins, it binds directly to the 5'-end of the 23S rRNA, where it nucleates assembly of the 50S subunit. In terms of biological role, located at the polypeptide exit tunnel on the outside of the subunit. The sequence is that of Large ribosomal subunit protein uL24 from Methanobrevibacter smithii (strain ATCC 35061 / DSM 861 / OCM 144 / PS).